The following is a 185-amino-acid chain: Ribulose bisphosphate carboxylase small subunit, chloroplastic 2 (185 aa).

A chloroplast-targeting transit peptide spans 1 to 45; that stretch reads MAAVIAKSSVSAAVARPARSSVRPMAALKPAVKAAPVAAPAQANQ. The residue at position 46 (Met-46) is an N-methylmethionine.

It belongs to the RuBisCO small chain family. As to quaternary structure, heterohexadecamer of 8 large and 8 small subunits.

It localises to the plastid. Its subcellular location is the chloroplast. It is found in the chloroplast stroma. Its function is as follows. RuBisCO catalyzes two reactions: the carboxylation of D-ribulose 1,5-bisphosphate, the primary event in carbon dioxide fixation, as well as the oxidative fragmentation of the pentose substrate. Both reactions occur simultaneously and in competition at the same active site. Although the small subunit is not catalytic it is essential for maximal activity. This Chlamydomonas reinhardtii (Chlamydomonas smithii) protein is Ribulose bisphosphate carboxylase small subunit, chloroplastic 2.